Reading from the N-terminus, the 7214-residue chain is Nonribosomal peptide synthetase atnA (7214 aa).

The interval 257–651 (ERKALEQPHA…VGRKDTQVKI (395 aa)) is adenylation 1. The 77-residue stretch at 786-862 (EPVTETEKAV…AMSQIAVELS (77 aa)) folds into the Carrier 1 domain. The residue at position 823 (serine 823) is an O-(pantetheine 4'-phosphoryl)serine. The tract at residues 899-1318 (EDAYPATALQ…LVSQKDYTQI (420 aa)) is condensation 1. The segment at 1340–1735 (QVLATPDAPA…ARKDTQAKVR (396 aa)) is adenylation 2. Residues 1877–1953 (QPTSDIEKKV…ALAGRAQYIE (77 aa)) form the Carrier 2 domain. Residue serine 1914 is modified to O-(pantetheine 4'-phosphoryl)serine. Residues 1962-2384 (PEAEVIDEWF…RQVLETGIDE (423 aa)) form an epimerization region. Residues 2431 to 2845 (SPCSPMQLGL…MLSPLDRASL (415 aa)) are condensation 2. Positions 2866–3262 (QNARKRPHAL…VGRKDTQVKV (397 aa)) are adenylation 3. Positions 3398–3472 (ALETPMEETI…DMARIVVAAY (75 aa)) constitute a Carrier 3 domain. Serine 3433 carries the post-translational modification O-(pantetheine 4'-phosphoryl)serine. The interval 3510–3904 (VEDVYPSTSL…QLCENEDGRL (395 aa)) is condensation 3. The interval 3943–4339 (ERARLHPDLL…VGRKDSQVKL (397 aa)) is adenylation 4. The region spanning 4476–4552 (VPGSEAEKVI…ELAGRVTSIS (77 aa)) is the Carrier 4 domain. Residue serine 4513 is modified to O-(pantetheine 4'-phosphoryl)serine. The tract at residues 4601 to 5033 (VEDVYPCSPL…TSAAMRAQLL (433 aa)) is condensation 4. The tract at residues 5051–5446 (FHRTALRYPE…VGRKDTQIKF (396 aa)) is adenylation 5. The tract at residues 5489–5515 (FITTEGGSGHENKGSPSLKGSSGDPVS) is disordered. The Carrier 5 domain maps to 5591–5667 (APRTAMEKRL…QMANIVARNA (77 aa)). At serine 5628 the chain carries O-(pantetheine 4'-phosphoryl)serine. The tract at residues 5707–6123 (QDVYPCTPLQ…HLLGDNEIKM (417 aa)) is condensation 5. Residues 6145–6543 (ERAVLQPEAI…GRKDTQIKLR (399 aa)) are adenylation 6. The region spanning 6683–6766 (DPADKLALAL…DVARMIEHGN (84 aa)) is the Carrier 6 domain. At serine 6725 the chain carries O-(pantetheine 4'-phosphoryl)serine. The thioesterase (TE) domain stretch occupies residues 6814 to 7194 (ILLTGATGFL…KSISYMRQIG (381 aa)). The interval 6895 to 6915 (STVEGRDHPGSESGSTAGPAE) is disordered.

It belongs to the NRP synthetase family.

It participates in secondary metabolite biosynthesis. Functionally, nonribosomal peptide synthetase; part of the gene cluster that mediates the biosynthesis of aspercryptins, linear lipopeptides built from six amino acids including 2 highly unusual and nonproteogenic amino acids, 2-amino-octanoic acid (2aoa) and 2-amino-dodecanol (2adol). The core structure of aspercryptins is as follows: Ser/Ala-Thr-Ile/Val-2aoa-Asn-2adol. The first step of aspercryptin biosynthesis is the generation of the fatty acid precursors, octanoic and dodecanoic acids, by the FAS subunits atnF and atnM. The fatty acid precursors are likely transformed into the corresponding alpha-amino fatty acids in three steps. First, they are hydroxylated by the cytochrome P450 monooxygenase atnE, then oxidized to the corresponding alpha-keto acids by the NAD(P)-dependent oxidoreductase atnD, and finally converted to the alpha-amino fatty acids by the PLP-dependent aminotransferases atnH or atnJ. the alpha-amino fatty acids, 2-amino-octanoic and 2-amino-dodecanoic acids, are recognized, activated, and covalently tethered to the NRPS atnA by its fourth and sixth adenylation domains. The second module of atnA is the Thr module and contains an epimerase (E) domain responsible for the epimerization of Thr to D-allo-Thr. Additionally, despite atnA having only one epimerase domain, the first amino acid of aspercryptin A1 is D-Ser, suggesting that serine is either loaded directly as D-Ser on the first module or that the epimerase domain in the threonine module epimerizes both L-Ser and L-Thr. After condensation of the hexapeptide of aspercryptin, the C-terminal reductase (TE) domain might be involved in the reductive release and production of the aldehyde hexapeptide. Further reduction would generate aspercryptins. The variety of aspercryptins produced reflects the flexibility of the atnA NRPS, allowing incorporation of alanine instead of serine, valine for isoleucine, and a C10 fatty amino alcohol instead of the C12 version. AtnB seems to be involved in the selectivity for Ile versus Val by the third module. Moreover, type B, C and D aspercryptins have an additional N-terminal cichorine, acetyl and propionyl group respectively. This is Nonribosomal peptide synthetase atnA from Emericella nidulans (strain FGSC A4 / ATCC 38163 / CBS 112.46 / NRRL 194 / M139) (Aspergillus nidulans).